The sequence spans 359 residues: Carbamoyl phosphate synthase small chain (359 aa).

Positions 1–169 (MTKRILVLED…TKTSYPAPGV (169 aa)) are CPSase. Ser46, Gly220, and Gly222 together coordinate L-glutamine. The Glutamine amidotransferase type-1 domain occupies 172–358 (SVVLVDFGLK…IEMMEVFKQS (187 aa)). Cys247 acts as the Nucleophile in catalysis. Residues Met248, Gln251, Asn289, Gly291, and Tyr292 each contribute to the L-glutamine site. Catalysis depends on residues His331 and Asp333.

This sequence belongs to the CarA family. In terms of assembly, composed of two chains; the small (or glutamine) chain promotes the hydrolysis of glutamine to ammonia, which is used by the large (or ammonia) chain to synthesize carbamoyl phosphate. Tetramer of heterodimers (alpha,beta)4.

It catalyses the reaction hydrogencarbonate + L-glutamine + 2 ATP + H2O = carbamoyl phosphate + L-glutamate + 2 ADP + phosphate + 2 H(+). It carries out the reaction L-glutamine + H2O = L-glutamate + NH4(+). Its pathway is amino-acid biosynthesis; L-arginine biosynthesis; carbamoyl phosphate from bicarbonate: step 1/1. It participates in pyrimidine metabolism; UMP biosynthesis via de novo pathway; (S)-dihydroorotate from bicarbonate: step 1/3. Small subunit of the glutamine-dependent carbamoyl phosphate synthetase (CPSase). CPSase catalyzes the formation of carbamoyl phosphate from the ammonia moiety of glutamine, carbonate, and phosphate donated by ATP, constituting the first step of 2 biosynthetic pathways, one leading to arginine and/or urea and the other to pyrimidine nucleotides. The small subunit (glutamine amidotransferase) binds and cleaves glutamine to supply the large subunit with the substrate ammonia. This chain is Carbamoyl phosphate synthase small chain, found in Streptococcus pneumoniae (strain ATCC BAA-255 / R6).